Here is a 123-residue protein sequence, read N- to C-terminus: UPF0102 protein PSPPH_4120 (123 aa).

Belongs to the UPF0102 family.

This Pseudomonas savastanoi pv. phaseolicola (strain 1448A / Race 6) (Pseudomonas syringae pv. phaseolicola (strain 1448A / Race 6)) protein is UPF0102 protein PSPPH_4120.